We begin with the raw amino-acid sequence, 679 residues long: Protein hook (679 aa).

Residues 6–123 (NEMYYSLLEW…RLLQLVLGCA (118 aa)) form the Calponin-homology (CH) domain. Coiled coils occupy residues 135-437 (EIMC…LKCG) and 480-574 (QTAL…QEIL).

Belongs to the hook family. As to quaternary structure, homodimer. Interacts with microtubules via its N-terminus.

The protein localises to the cytoplasm. Its subcellular location is the cytoskeleton. The protein resides in the endosome. It is found in the synapse. In terms of biological role, involved in endocytic trafficking by stabilizing organelles of the endocytic pathway. Probably acts as a cytoskeletal linker protein required to tether endosome vesicles to the cytoskeleton. Involved in modulation of endocytosis at stages required for down-regulation of membrane proteins that control synapse size. Not involved in synaptic vesicle recycling. Required in R7 cells for boss endocytosis into multivesicular bodies (MVBs). Has a role in regulating adult longevity. The sequence is that of Protein hook from Drosophila simulans (Fruit fly).